The sequence spans 429 residues: Adenylosuccinate synthetase (429 aa).

Residues 12 to 18 and 40 to 42 each bind GTP; these read GDEGKGK and GHT. Aspartate 13 serves as the catalytic Proton acceptor. Mg(2+) is bound by residues aspartate 13 and glycine 40. IMP is bound by residues 13–16, 38–41, threonine 128, arginine 142, glutamine 223, threonine 238, and arginine 302; these read DEGK and NAGH. Histidine 41 acts as the Proton donor in catalysis. 298–304 serves as a coordination point for substrate; sequence VNTGRPR. GTP contacts are provided by residues arginine 304, 330–332, and 412–414; these read KLD and GVG.

The protein belongs to the adenylosuccinate synthetase family. In terms of assembly, homodimer. It depends on Mg(2+) as a cofactor.

It is found in the cytoplasm. The enzyme catalyses IMP + L-aspartate + GTP = N(6)-(1,2-dicarboxyethyl)-AMP + GDP + phosphate + 2 H(+). It participates in purine metabolism; AMP biosynthesis via de novo pathway; AMP from IMP: step 1/2. Its function is as follows. Plays an important role in the de novo pathway of purine nucleotide biosynthesis. Catalyzes the first committed step in the biosynthesis of AMP from IMP. The sequence is that of Adenylosuccinate synthetase from Kocuria rhizophila (strain ATCC 9341 / DSM 348 / NBRC 103217 / DC2201).